The chain runs to 151 residues: SsrA-binding protein (151 aa).

The protein belongs to the SmpB family.

It localises to the cytoplasm. Required for rescue of stalled ribosomes mediated by trans-translation. Binds to transfer-messenger RNA (tmRNA), required for stable association of tmRNA with ribosomes. tmRNA and SmpB together mimic tRNA shape, replacing the anticodon stem-loop with SmpB. tmRNA is encoded by the ssrA gene; the 2 termini fold to resemble tRNA(Ala) and it encodes a 'tag peptide', a short internal open reading frame. During trans-translation Ala-aminoacylated tmRNA acts like a tRNA, entering the A-site of stalled ribosomes, displacing the stalled mRNA. The ribosome then switches to translate the ORF on the tmRNA; the nascent peptide is terminated with the 'tag peptide' encoded by the tmRNA and targeted for degradation. The ribosome is freed to recommence translation, which seems to be the essential function of trans-translation. The chain is SsrA-binding protein from Lactobacillus acidophilus (strain ATCC 700396 / NCK56 / N2 / NCFM).